Reading from the N-terminus, the 83-residue chain is Putative cytochrome b5 B11H24.095 (83 aa).

The Cytochrome b5 heme-binding domain occupies 2-78 (SQTFTKSQVA…GTKLKVGTLA (77 aa)). Heme is bound by residues H37 and H60.

The protein belongs to the cytochrome b5 family.

This is Putative cytochrome b5 B11H24.095 from Neurospora crassa (strain ATCC 24698 / 74-OR23-1A / CBS 708.71 / DSM 1257 / FGSC 987).